The sequence spans 1773 residues: Mucin-22 (1773 aa).

The first 26 residues, M1–E26, serve as a signal peptide directing secretion. Residues N27–P1660 lie on the Extracellular side of the membrane. Disordered stretches follow at residues T61 to G102, T176 to T357, M372 to E405, S434 to S572, T590 to E674, D754 to M1026, T1064 to T1485, and M1603 to T1639. The tract at residues M153–E1514 is 124 X 10 AA approximate repeats. Low complexity predominate over residues A178–A243. The segment covering I248–T258 has biased composition (polar residues). The span at A262 to T357 shows a compositional bias: low complexity. 2 stretches are compositionally biased toward low complexity: residues S440–T481 and S490–T546. The segment covering M547–S572 has biased composition (polar residues). Low complexity-rich tracts occupy residues T755 to T1025 and T1064 to T1465. Polar residues-rich tracts occupy residues N1466 to T1485 and R1615 to T1639. The helical transmembrane segment at W1661–L1681 threads the bilayer. The Cytoplasmic portion of the chain corresponds to S1682–H1773.

As to expression, expressed in lung by serous cells of the submucosal gland (at protein level). Detected in the placenta, lung and testis.

It localises to the membrane. The sequence is that of Mucin-22 (MUC22) from Homo sapiens (Human).